A 124-amino-acid chain; its full sequence is T cell receptor beta variable 13 (124 aa).

The N-terminal stretch at 1–31 (MLSPDLPDSAWNTRLLCRVMLCLLGAGSVAA) is a signal peptide. An Ig-like domain is found at 32-124 (GVIQSPRHLI…SALYFCASSL (93 aa)). C52 and C120 are oxidised to a cystine. Residue N106 is glycosylated (N-linked (GlcNAc...) asparagine).

Alpha-beta TR is a heterodimer composed of an alpha and beta chain; disulfide-linked. The alpha-beta TR is associated with the transmembrane signaling CD3 coreceptor proteins to form the TR-CD3 (TcR or TCR). The assembly of alpha-beta TR heterodimers with CD3 occurs in the endoplasmic reticulum where a single alpha-beta TR heterodimer associates with one CD3D-CD3E heterodimer, one CD3G-CD3E heterodimer and one CD247 homodimer forming a stable octameric structure. CD3D-CD3E and CD3G-CD3E heterodimers preferentially associate with TR alpha and TR beta chains, respectively. The association of the CD247 homodimer is the last step of TcR assembly in the endoplasmic reticulum and is required for transport to the cell surface.

Its subcellular location is the cell membrane. Functionally, v region of the variable domain of T cell receptor (TR) beta chain that participates in the antigen recognition. Alpha-beta T cell receptors are antigen specific receptors which are essential to the immune response and are present on the cell surface of T lymphocytes. Recognize peptide-major histocompatibility (MH) (pMH) complexes that are displayed by antigen presenting cells (APC), a prerequisite for efficient T cell adaptive immunity against pathogens. Binding of alpha-beta TR to pMH complex initiates TR-CD3 clustering on the cell surface and intracellular activation of LCK that phosphorylates the ITAM motifs of CD3G, CD3D, CD3E and CD247 enabling the recruitment of ZAP70. In turn ZAP70 phosphorylates LAT, which recruits numerous signaling molecules to form the LAT signalosome. The LAT signalosome propagates signal branching to three major signaling pathways, the calcium, the mitogen-activated protein kinase (MAPK) kinase and the nuclear factor NF-kappa-B (NF-kB) pathways, leading to the mobilization of transcription factors that are critical for gene expression and essential for T cell growth and differentiation. The T cell repertoire is generated in the thymus, by V-(D)-J rearrangement. This repertoire is then shaped by intrathymic selection events to generate a peripheral T cell pool of self-MH restricted, non-autoaggressive T cells. Post-thymic interaction of alpha-beta TR with the pMH complexes shapes TR structural and functional avidity. The chain is T cell receptor beta variable 13 from Homo sapiens (Human).